The sequence spans 428 residues: Stabilizer of axonemal microtubules 4 (428 aa).

The disordered stretch occupies residues 201–231; it reads AKEETGFTEESNKNPIVFQPPSQALPGDPVL.

Microtubule inner protein component of sperm flagellar doublet microtubules. Interacts with PPP1CA.

Its subcellular location is the cell projection. It localises to the cilium. The protein resides in the cytoplasm. The protein localises to the cytoskeleton. It is found in the flagellum axoneme. This Bos taurus (Bovine) protein is Stabilizer of axonemal microtubules 4.